An 898-amino-acid polypeptide reads, in one-letter code: MSETDHIASTSSDKNVGKTPELKEDSCNLFSGNESSKLENESKLLSLNTDKTLCQPNEHNNRIEAQENYIPDHGGGEDSCAKTDTGSENSEQIANFPSGNFAKHISKTNETEQKVTQILVELRSSTFPESANEKTYSESPYDTDCTKKFISKIKSVSASEDLLEEIESELLSTEFAEHRVPNGMNKGEHALVLFEKCVQDKYLQQEHIIKKLIKENKKHQELFVDICSEKDNLREELKKRTETEKQHMNTIKQLESRIEELNKEVKASRDQLIAQDVTAKNAVQQLHKEMAQRMEQANKKCEEARQEKEAMVMKYVRGEKESLDLRKEKETLEKKLRDANKELEKNTNKIKQLSQEKGRLHQLYETKEGETTRLIREIDKLKEDINSHVIKVKWAQNKLKAEMDSHKETKDKLKETTTKLTQAKEEADQIRKNCQDMIKTYQESEEIKSNELDAKLRVTKGELEKQMQEKSDQLEMHHAKIKELEDLKRTFKEGMDELRTLRTKVKCLEDERLRTEDELSKYKEIINRQKAEIQNLLDKVKTADQLQEQLQRGKQEIENLKEEVESLNSLINDLQKDIEGSRKRESELLLFTERLTSKNAQLQSESNSLQSQFDKVSCSESQLQSQCEQMKQTNINLESRLLKEEELRKEEVQTLQAELACRQTEVKALSTQVEELKDELVTQRRKHASSIKDLTKQLQQARRKLDQVESGSYDKEVSSMGSRSSSSGSLNARSSAEDRSPENTGSSVAVDNFPQVDKAMLIERIVRLQKAHARKNEKIEFMEDHIKQLVEEIRKKTKIIQSYILREESGTLSSEASDFNKVHLSRRGGIMASLYTSHPADNGLTLELSLEINRKLQAVLEDTLLKNITLKENLQTLGTEIERLIKHQHELEQRTKKT.

Disordered stretches follow at residues 1–43 (MSET…NESK), 68–95 (NYIP…QIAN), and 702–749 (RRKL…SSVA). S2 carries the N-acetylserine modification. Residues 82–95 (KTDTGSENSEQIAN) show a composition bias toward polar residues. Residues 201 to 712 (KYLQQEHIIK…RKLDQVESGS (512 aa)) adopt a coiled-coil conformation. Residues 703 to 717 (RKLDQVESGSYDKEV) are compositionally biased toward basic and acidic residues. Residues 718–734 (SSMGSRSSSSGSLNARS) show a composition bias toward low complexity. S740 is modified (phosphoserine). Coiled-coil stretches lie at residues 759 to 803 (AMLI…IQSY) and 855 to 894 (KLQA…LEQR).

The polypeptide is Coiled-coil domain-containing protein 186 (CCDC186) (Homo sapiens (Human)).